We begin with the raw amino-acid sequence, 651 residues long: Probable potassium transport system protein Kup (651 aa).

The span at 1–16 (MRDSPGSKSSSERWHD) shows a compositional bias: basic and acidic residues. The interval 1–31 (MRDSPGSKSSSERWHDTMAVSDPTAEGKDES) is disordered. Transmembrane regions (helical) follow at residues 38-58 (FWAL…TSPL), 74-94 (VTPA…FIVV), 129-149 (LLLL…SMIT), 168-188 (LQDY…AVQS), 197-217 (AFAP…VLHI), 232-252 (AIHF…LVFL), 276-296 (WFCL…ALIL), 309-329 (LAPA…TVIA), 366-386 (IYLP…VLLF), 396-416 (YGIA…VVVW), 423-443 (PAAA…FFSA), and 448-468 (LFDG…LIWT).

It belongs to the HAK/KUP transporter (TC 2.A.72) family.

It localises to the cell inner membrane. It catalyses the reaction K(+)(in) + H(+)(in) = K(+)(out) + H(+)(out). Transport of potassium into the cell. Likely operates as a K(+):H(+) symporter. The protein is Probable potassium transport system protein Kup of Nitrobacter winogradskyi (strain ATCC 25391 / DSM 10237 / CIP 104748 / NCIMB 11846 / Nb-255).